Here is a 445-residue protein sequence, read N- to C-terminus: ATP-dependent protease ATPase subunit HslU (445 aa).

ATP is bound by residues Ile17, 59–64 (GVGKTE), Asp254, Glu319, and Arg391.

It belongs to the ClpX chaperone family. HslU subfamily. As to quaternary structure, a double ring-shaped homohexamer of HslV is capped on each side by a ring-shaped HslU homohexamer. The assembly of the HslU/HslV complex is dependent on binding of ATP.

Its subcellular location is the cytoplasm. In terms of biological role, ATPase subunit of a proteasome-like degradation complex; this subunit has chaperone activity. The binding of ATP and its subsequent hydrolysis by HslU are essential for unfolding of protein substrates subsequently hydrolyzed by HslV. HslU recognizes the N-terminal part of its protein substrates and unfolds these before they are guided to HslV for hydrolysis. This is ATP-dependent protease ATPase subunit HslU from Pseudomonas savastanoi pv. phaseolicola (strain 1448A / Race 6) (Pseudomonas syringae pv. phaseolicola (strain 1448A / Race 6)).